The chain runs to 600 residues: Elongation factor 4 (600 aa).

A tr-type G domain is found at S5–E187. Residues D17 to T22 and N134 to D137 each bind GTP.

Belongs to the TRAFAC class translation factor GTPase superfamily. Classic translation factor GTPase family. LepA subfamily.

Its subcellular location is the cell inner membrane. The catalysed reaction is GTP + H2O = GDP + phosphate + H(+). Required for accurate and efficient protein synthesis under certain stress conditions. May act as a fidelity factor of the translation reaction, by catalyzing a one-codon backward translocation of tRNAs on improperly translocated ribosomes. Back-translocation proceeds from a post-translocation (POST) complex to a pre-translocation (PRE) complex, thus giving elongation factor G a second chance to translocate the tRNAs correctly. Binds to ribosomes in a GTP-dependent manner. This is Elongation factor 4 from Paramagnetospirillum magneticum (strain ATCC 700264 / AMB-1) (Magnetospirillum magneticum).